The sequence spans 156 residues: Small ribosomal subunit protein uS7 (156 aa).

Belongs to the universal ribosomal protein uS7 family. Part of the 30S ribosomal subunit. Contacts proteins S9 and S11.

In terms of biological role, one of the primary rRNA binding proteins, it binds directly to 16S rRNA where it nucleates assembly of the head domain of the 30S subunit. Is located at the subunit interface close to the decoding center, probably blocks exit of the E-site tRNA. This Treponema pallidum (strain Nichols) protein is Small ribosomal subunit protein uS7.